The sequence spans 405 residues: Serine/threonine transporter SstT (405 aa).

Transmembrane regions (helical) follow at residues 13 to 33, 43 to 63, 81 to 101, 140 to 160, 191 to 211, 215 to 235, 297 to 317, 338 to 358, and 362 to 382; these read GNLV…ATFS, IGNL…FILV, IVVL…ILSF, ALMN…GLAL, FGIF…ALAG, LLAV…PMIV, MAGA…TMGI, ASGV…LFGI, and IAMQ…SAET.

It belongs to the dicarboxylate/amino acid:cation symporter (DAACS) (TC 2.A.23) family.

The protein resides in the cell inner membrane. The enzyme catalyses L-serine(in) + Na(+)(in) = L-serine(out) + Na(+)(out). It carries out the reaction L-threonine(in) + Na(+)(in) = L-threonine(out) + Na(+)(out). In terms of biological role, involved in the import of serine and threonine into the cell, with the concomitant import of sodium (symport system). The sequence is that of Serine/threonine transporter SstT from Vibrio cholerae serotype O1 (strain ATCC 39315 / El Tor Inaba N16961).